Consider the following 373-residue polypeptide: Glutamate 5-kinase (373 aa).

Position 15 (Lys-15) interacts with ATP. Ser-55, Asp-142, and Asn-154 together coordinate substrate. ATP-binding positions include 174 to 175 (TD) and 216 to 222 (TGGMATK). Residues 281-359 (AGSIVVDAGA…SEIERILGFR (79 aa)) enclose the PUA domain.

This sequence belongs to the glutamate 5-kinase family.

It is found in the cytoplasm. It carries out the reaction L-glutamate + ATP = L-glutamyl 5-phosphate + ADP. Its pathway is amino-acid biosynthesis; L-proline biosynthesis; L-glutamate 5-semialdehyde from L-glutamate: step 1/2. Functionally, catalyzes the transfer of a phosphate group to glutamate to form L-glutamate 5-phosphate. This chain is Glutamate 5-kinase, found in Geobacter sp. (strain M21).